Consider the following 205-residue polypeptide: Thymidylate kinase (205 aa).

10–17 (GTEGVGKS) lines the ATP pocket.

It belongs to the thymidylate kinase family.

The catalysed reaction is dTMP + ATP = dTDP + ADP. In terms of biological role, phosphorylation of dTMP to form dTDP in both de novo and salvage pathways of dTTP synthesis. The sequence is that of Thymidylate kinase from Teredinibacter turnerae (strain ATCC 39867 / T7901).